The chain runs to 2073 residues: Dedicator of cytokinesis protein 11 (2073 aa).

A Phosphoserine modification is found at Ser-12. Thr-16 is modified (phosphothreonine). A phosphoserine mark is found at Ser-23 and Ser-161. Residues 165 to 272 (GVIKQGWLHK…WLITLKKIIQ (108 aa)) form the PH domain. Tyr-248 is modified (phosphotyrosine). Residues Ser-306, Ser-440, and Ser-445 each carry the phosphoserine modification. Residues 640-818 (KNHLYVYPLQ…PLLKIKSHLE (179 aa)) enclose the C2 DOCK-type domain. The interval 1226–1267 (FQNGHGIKREDSRGSLIPEGATGFPDQGNTGENTRQSSTRSS) is disordered. 2 positions are modified to phosphoserine: Ser-1237 and Ser-1240. Residues 1609–2036 (KSYASTPELR…LSDIIHEQIL (428 aa)) form the DOCKER domain.

It belongs to the DOCK family. In terms of assembly, interacts with CDC42.

Functionally, guanine nucleotide-exchange factor (GEF) that activates CDC42 by exchanging bound GDP for free GTP. Required for marginal zone (MZ) B-cell development, is associated with early bone marrow B-cell development, MZ B-cell formation, MZ B-cell number and marginal metallophilic macrophages morphology. Facilitates filopodia formation through the activation of CDC42. The protein is Dedicator of cytokinesis protein 11 of Homo sapiens (Human).